The chain runs to 68 residues: Protease A inhibitor 3 (68 aa).

M1 bears the N-acetylmethionine mark. A compositionally biased stretch (polar residues) spans 1-14; the sequence is MNTDQQKVSEIFQS. 2 disordered regions span residues 1–21 and 33–68; these read MNTDQQKVSEIFQSSKEKLQG and MASQDKDGKTTDADESEKHNYQEQYNKLKGAGHKKE. Residues 1–32 form an inhibitory domain region; the sequence is MNTDQQKVSEIFQSSKEKLQGDAKVVSDAFKK. Over residues 33–53 the composition is skewed to basic and acidic residues; it reads MASQDKDGKTTDADESEKHNY.

This sequence belongs to the protease inhibitor I34 family.

Specific and potent inhibitor for yeast aspartic protease A (yscA). The proteinase acts as a folding template stabilizing the helical conformation in the inhibitor, which results in the potent and specific blockage of the proteolytic activity. The polypeptide is Protease A inhibitor 3 (PAI3) (Saccharomyces cerevisiae (strain ATCC 204508 / S288c) (Baker's yeast)).